The sequence spans 600 residues: Aspartate--tRNA(Asp/Asn) ligase (600 aa).

An L-aspartate-binding site is contributed by Glu181. The aspartate stretch occupies residues 205–208 (QQFK). Arg227 contributes to the L-aspartate binding site. Residues 227-229 (RDE) and Gln236 each bind ATP. Residue His455 coordinates L-aspartate. Glu489 is a binding site for ATP. Arg496 is an L-aspartate binding site. 541–544 (GIDR) contacts ATP.

This sequence belongs to the class-II aminoacyl-tRNA synthetase family. Type 1 subfamily. Homodimer.

The protein localises to the cytoplasm. It carries out the reaction tRNA(Asx) + L-aspartate + ATP = L-aspartyl-tRNA(Asx) + AMP + diphosphate. Its function is as follows. Aspartyl-tRNA synthetase with relaxed tRNA specificity since it is able to aspartylate not only its cognate tRNA(Asp) but also tRNA(Asn). Reaction proceeds in two steps: L-aspartate is first activated by ATP to form Asp-AMP and then transferred to the acceptor end of tRNA(Asp/Asn). In Rubrobacter xylanophilus (strain DSM 9941 / JCM 11954 / NBRC 16129 / PRD-1), this protein is Aspartate--tRNA(Asp/Asn) ligase.